Here is a 268-residue protein sequence, read N- to C-terminus: Undecaprenyl-diphosphatase (268 aa).

Transmembrane regions (helical) follow at residues 47–67, 83–103, 109–129, 144–164, 184–204, 218–238, and 246–266; these read FAIL…FFKL, FIIG…IAGK, LFDP…LLWV, YPLM…IPGV, AAEF…VYDF, LIAI…KAFL, and FVLF…ALAL.

This sequence belongs to the UppP family.

The protein localises to the cell inner membrane. It catalyses the reaction di-trans,octa-cis-undecaprenyl diphosphate + H2O = di-trans,octa-cis-undecaprenyl phosphate + phosphate + H(+). Catalyzes the dephosphorylation of undecaprenyl diphosphate (UPP). Confers resistance to bacitracin. This is Undecaprenyl-diphosphatase from Bradyrhizobium sp. (strain ORS 278).